Reading from the N-terminus, the 736-residue chain is Prolyl oligopeptidase dbiP (736 aa).

Catalysis depends on charge relay system residues Ser572, Asp656, and His692.

It belongs to the peptidase S9A family. In terms of assembly, monomer.

The catalysed reaction is Hydrolysis of Pro-|-Xaa &gt;&gt; Ala-|-Xaa in oligopeptides.. The protein operates within mycotoxin biosynthesis. In terms of biological role, prolyl oligopeptidase; part of the gene cluster that mediates the biosynthesis of dendrothelin A, a highly methylated cyclic dodecapeptide showing slight nematodicidal activity. Excises and catalyzes the macrocyclization of the methylated core peptide of dbiMA to yield dendrothelin A. DbiP works in a two-step fashion with an initial cleavage at the N-terminus, followed by a second cleavage at the C-terminus of the core peptide. According to this mechanism, the free N-terminus of the core peptide, generated by the first cleavage, attacks the covalent intermediate of the second cleavage, which results in macrocyclization of the core peptide. The sequence is that of Prolyl oligopeptidase dbiP from Dendrothele bispora (strain CBS 962.96).